A 265-amino-acid polypeptide reads, in one-letter code: Glutamate racemase (265 aa).

Residues 12-13 and 44-45 each bind substrate; these read DS and YG. Cysteine 75 functions as the Proton donor/acceptor in the catalytic mechanism. 76 to 77 provides a ligand contact to substrate; the sequence is NT. The Proton donor/acceptor role is filled by cysteine 186. Position 187 to 188 (187 to 188) interacts with substrate; the sequence is TH.

It belongs to the aspartate/glutamate racemases family.

The enzyme catalyses L-glutamate = D-glutamate. It functions in the pathway cell wall biogenesis; peptidoglycan biosynthesis. Provides the (R)-glutamate required for cell wall biosynthesis. The polypeptide is Glutamate racemase (Pseudomonas putida (strain GB-1)).